The chain runs to 588 residues: Aspartate--tRNA ligase (588 aa).

Residue Glu-172 coordinates L-aspartate. Residues 196–199 are aspartate; it reads QLFK. Arg-218 lines the L-aspartate pocket. ATP is bound by residues 218–220 and Gln-227; that span reads RDE. His-449 contacts L-aspartate. Glu-483 is a binding site for ATP. Arg-490 contacts L-aspartate. 535–538 contributes to the ATP binding site; the sequence is GLDR.

The protein belongs to the class-II aminoacyl-tRNA synthetase family. Type 1 subfamily. As to quaternary structure, homodimer.

Its subcellular location is the cytoplasm. The enzyme catalyses tRNA(Asp) + L-aspartate + ATP = L-aspartyl-tRNA(Asp) + AMP + diphosphate. Functionally, catalyzes the attachment of L-aspartate to tRNA(Asp) in a two-step reaction: L-aspartate is first activated by ATP to form Asp-AMP and then transferred to the acceptor end of tRNA(Asp). In Haemophilus influenzae (strain PittGG), this protein is Aspartate--tRNA ligase.